Reading from the N-terminus, the 464-residue chain is Soluble pyridine nucleotide transhydrogenase (464 aa).

35–44 is a binding site for FAD; it reads DNRPLVGGNC.

It belongs to the class-I pyridine nucleotide-disulfide oxidoreductase family. Requires FAD as cofactor.

It is found in the cytoplasm. It catalyses the reaction NAD(+) + NADPH = NADH + NADP(+). In terms of biological role, conversion of NADPH, generated by peripheral catabolic pathways, to NADH, which can enter the respiratory chain for energy generation. The chain is Soluble pyridine nucleotide transhydrogenase from Stutzerimonas stutzeri (strain A1501) (Pseudomonas stutzeri).